A 616-amino-acid polypeptide reads, in one-letter code: Chaperone protein HtpG (616 aa).

The interval 1–334 (MAEKQIHTFQ…TADLPLNVSR (334 aa)) is a; substrate-binding. A b region spans residues 335–549 (EILQGNKVVD…ENEMGGNMER (215 aa)). Residues 550 to 616 (IMKSLGQDVP…FVKRINKLIN (67 aa)) form a c region.

This sequence belongs to the heat shock protein 90 family. In terms of assembly, homodimer.

The protein localises to the cytoplasm. Functionally, molecular chaperone. Has ATPase activity. The protein is Chaperone protein HtpG of Ruthia magnifica subsp. Calyptogena magnifica.